The sequence spans 117 residues: MDTKMQSLPTTHPHPHSSSRPQSHTSNQCNQCTCSHHCRSCSQAGHAGSSSSPSPGPPMKHPKPSVHSRHSPARPSHRGSCPKNRKTFEGKVSKRKAVRRRKRTHRAKRRSSGRRYK.

The segment at 1 to 117 (MDTKMQSLPT…KRRSSGRRYK (117 aa)) is disordered. A compositionally biased stretch (low complexity) spans 7–26 (SLPTTHPHPHSSSRPQSHTS). Positions 12, 14, 16, 24, 32, 34, 38, and 41 each coordinate Zn(2+). A compositionally biased stretch (low complexity) spans 44–53 (AGHAGSSSSP). Basic residues-rich tracts occupy residues 60-77 (KHPKPSVHSRHSPARPSH) and 93-117 (SKRKAVRRRKRTHRAKRRSSGRRYK). The short motif at 90–98 (GKVSKRKAV) is the Nuclear localization signal element. Phosphoserine is present on Ser-112.

This sequence belongs to the nuclear transition protein 2 family.

The protein resides in the nucleus. Its subcellular location is the chromosome. Plays a key role in the replacement of histones to protamine in the elongating spermatids of mammals. In condensing spermatids, loaded onto the nucleosomes, where it promotes the recruitment and processing of protamines, which are responsible for histone eviction. The histone H2AB1-H2BC1/TH2B dimer is required for loading of TNP2 onto chromatin. The sequence is that of Nuclear transition protein 2 from Mus musculus (Mouse).